The primary structure comprises 393 residues: NAD(P)H-quinone oxidoreductase subunit H, chloroplastic (393 aa).

It belongs to the complex I 49 kDa subunit family. In terms of assembly, NDH is composed of at least 16 different subunits, 5 of which are encoded in the nucleus.

The protein resides in the plastid. Its subcellular location is the chloroplast thylakoid membrane. It catalyses the reaction a plastoquinone + NADH + (n+1) H(+)(in) = a plastoquinol + NAD(+) + n H(+)(out). The catalysed reaction is a plastoquinone + NADPH + (n+1) H(+)(in) = a plastoquinol + NADP(+) + n H(+)(out). Its function is as follows. NDH shuttles electrons from NAD(P)H:plastoquinone, via FMN and iron-sulfur (Fe-S) centers, to quinones in the photosynthetic chain and possibly in a chloroplast respiratory chain. The immediate electron acceptor for the enzyme in this species is believed to be plastoquinone. Couples the redox reaction to proton translocation, and thus conserves the redox energy in a proton gradient. This Lobularia maritima (Sweet alyssum) protein is NAD(P)H-quinone oxidoreductase subunit H, chloroplastic.